The sequence spans 318 residues: Ubiquinone biosynthesis protein COQ9, mitochondrial (318 aa).

The transit peptide at 1–44 (MAAAAVSGALGRAGWRLLQLRCLPVARCRQALVPRAFHASAVGL) directs the protein to the mitochondrion. An SIFI-degron motif is present at residues 16 to 31 (RLLQLRCLPVARCRQA). The tract at residues 44–98 (LRSSDEQKQQPPNSFSQQHSETQGAEKPDPESSHSPPRYTDQGGEEEEDYESEEQ) is disordered. Residues 52 to 66 (QQPPNSFSQQHSETQ) show a composition bias toward polar residues. Residues 86–97 (GGEEEEDYESEE) show a composition bias toward acidic residues. At K175 the chain carries N6-acetyllysine. Position 244 (R244) interacts with a 1,2-diacylglycero-3-phosphoethanolamine.

The protein belongs to the COQ9 family. As to quaternary structure, homodimer. Heterodimer; two heterodimers of COQ7:COQ9 come together on the same side of the lipid pseudo-bilayer and form a curved tetramer with a hydrophobic surface suitable for membrane interaction. These two tetramers assemble into a soluble octamer with a pseudo-bilayer of lipids captured within. Interacts with COQ7; this interaction allows ubiquinone (CoQ) isoprene intermediates presentation to COQ7 and facilitates the COQ7-mediated hydroxylase step. Post-translationally, in response to mitochondrial stress, the precursor protein is ubiquitinated by the SIFI complex in the cytoplasm before mitochondrial import, leading to its degradation. Within the SIFI complex, UBR4 initiates ubiquitin chain that are further elongated or branched by KCMF1.

It localises to the mitochondrion. Its pathway is cofactor biosynthesis; ubiquinone biosynthesis. In terms of biological role, membrane-associated protein that warps the membrane surface to access and bind aromatic isoprenes with high specificity, including ubiquinone (CoQ) isoprene intermediates and presents them directly to COQ7, therefore facilitating the COQ7-mediated hydroxylase step. Participates in the biosynthesis of coenzyme Q, also named ubiquinone, an essential lipid-soluble electron transporter for aerobic cellular respiration. The chain is Ubiquinone biosynthesis protein COQ9, mitochondrial from Homo sapiens (Human).